The primary structure comprises 357 residues: Phosphoribosylformylglycinamidine cyclo-ligase (357 aa).

Belongs to the AIR synthase family.

The protein localises to the cytoplasm. It catalyses the reaction 2-formamido-N(1)-(5-O-phospho-beta-D-ribosyl)acetamidine + ATP = 5-amino-1-(5-phospho-beta-D-ribosyl)imidazole + ADP + phosphate + H(+). It participates in purine metabolism; IMP biosynthesis via de novo pathway; 5-amino-1-(5-phospho-D-ribosyl)imidazole from N(2)-formyl-N(1)-(5-phospho-D-ribosyl)glycinamide: step 2/2. This chain is Phosphoribosylformylglycinamidine cyclo-ligase, found in Rhodopseudomonas palustris (strain BisB18).